The sequence spans 403 residues: MSDPTPPRLQRVTVLGATGSIGMSTLDVLARHPDRFEAFALTAQIQVERLFELCLRFSPRFAVLVDSAAASDLRQRLKAAGSATEVLAGPGALVDVAAHPDSDAVMAAIVGAAGLAPALAAARAGKRVLLANKEALVLSGRLFMQAVVESGAELLPIDSEHNAVFQALPQGYARDPQRCGVRRVLLTASGGPFRERSIESLADVTPDEACAHPNWVMGRKISVDSATMMNKGLEVIEAHWLFAVPPEAIEVVVHPQSVIHSMVEYADGSVLAQLGNPDMRTPIAHALAYPERIDAGVRPLDLFEIGRLNFERPDFVRFPCLALAYDALREGGAAAAVLNAANEEAVAAFLERRVGFTRIPDIIAATLERARDLSVDCIEAILDADARAREVARSEILARQTTP.

Residues T18, G19, S20, I21, Q46, and N132 each coordinate NADPH. K133 contributes to the 1-deoxy-D-xylulose 5-phosphate binding site. An NADPH-binding site is contributed by E134. Position 158 (D158) interacts with Mn(2+). S159, E160, S189, and H212 together coordinate 1-deoxy-D-xylulose 5-phosphate. Residue E160 coordinates Mn(2+). An NADPH-binding site is contributed by G218. Positions 225, 230, 231, and 234 each coordinate 1-deoxy-D-xylulose 5-phosphate. Mn(2+) is bound at residue E234.

Belongs to the DXR family. Requires Mg(2+) as cofactor. Mn(2+) is required as a cofactor.

It catalyses the reaction 2-C-methyl-D-erythritol 4-phosphate + NADP(+) = 1-deoxy-D-xylulose 5-phosphate + NADPH + H(+). The protein operates within isoprenoid biosynthesis; isopentenyl diphosphate biosynthesis via DXP pathway; isopentenyl diphosphate from 1-deoxy-D-xylulose 5-phosphate: step 1/6. In terms of biological role, catalyzes the NADPH-dependent rearrangement and reduction of 1-deoxy-D-xylulose-5-phosphate (DXP) to 2-C-methyl-D-erythritol 4-phosphate (MEP). The protein is 1-deoxy-D-xylulose 5-phosphate reductoisomerase of Aromatoleum aromaticum (strain DSM 19018 / LMG 30748 / EbN1) (Azoarcus sp. (strain EbN1)).